We begin with the raw amino-acid sequence, 663 residues long: DNA topoisomerase 4 subunit B (663 aa).

Residues Y21, N61, D88, 130–136 (GLHGVGI), and K360 each bind ATP. Residues 440–554 (TELFIVEGDS…EGHLYLAKPP (115 aa)) enclose the Toprim domain. 3 residues coordinate Mg(2+): E446, D519, and D521.

It belongs to the type II topoisomerase family. ParE type 1 subfamily. Heterotetramer composed of ParC and ParE. The cofactor is Mg(2+). Requires Mn(2+) as cofactor. Ca(2+) serves as cofactor.

The enzyme catalyses ATP-dependent breakage, passage and rejoining of double-stranded DNA.. Its function is as follows. Topoisomerase IV is essential for chromosome segregation. It relaxes supercoiled DNA. Performs the decatenation events required during the replication of a circular DNA molecule. The protein is DNA topoisomerase 4 subunit B of Rickettsia typhi (strain ATCC VR-144 / Wilmington).